Reading from the N-terminus, the 432-residue chain is RING finger protein 44 (432 aa).

The interval 1-86 (MRPWALAVTR…GGSPRMLHPA (86 aa)) is disordered. The span at 56-65 (QQPPSRPPHL) shows a compositional bias: pro residues. The RING-type; atypical zinc-finger motif lies at 380-421 (CVVCFSDFEARQLLRVLPCNHEFHTKCVDKWLKANRTCPICR).

The polypeptide is RING finger protein 44 (RNF44) (Homo sapiens (Human)).